The primary structure comprises 209 residues: High frequency lysogenization protein HflD homolog (209 aa).

Belongs to the HflD family.

Its subcellular location is the cytoplasm. The protein localises to the cell inner membrane. The sequence is that of High frequency lysogenization protein HflD homolog from Marinomonas sp. (strain MWYL1).